The chain runs to 512 residues: SNF1-related protein kinase catalytic subunit alpha KIN11 (512 aa).

Residues 20–272 (YKLGKTLGIG…IPEIRQHRWF (253 aa)) enclose the Protein kinase domain. Residues 26–34 (LGIGSFGKV) and K49 each bind ATP. D143 serves as the catalytic Proton acceptor. S165 is modified (phosphoserine). Residue T176 is modified to Phosphothreonine; by GRIK1 or GRIK2. Residues 291-391 (AKKINEEIVQ…GARSQVPVDR (101 aa)) form an auto-inhibitory domain (AID) region. The UBA domain maps to 293-333 (KINEEIVQEVVNMGFDRNQVLESLRNRTQNDATVTYYLLLD). Positions 295 to 512 (NEEIVQEVVN…AAFLTELRVI (218 aa)) are regulatory domain (RD). The segment at 392–512 (KWALGLQSHA…AAFLTELRVI (121 aa)) is PPI. Residues 399 to 512 (SHAHPREIMN…AAFLTELRVI (114 aa)) form an interaction with PAD1 and SKP1 region. The KA1 domain maps to 463-511 (AMTSPTVIKFELQLYKAREEKYLLDIQRVNGPQFLFLDLCAAFLTELRV).

Belongs to the protein kinase superfamily. CAMK Ser/Thr protein kinase family. SNF1 subfamily. Subunit of a probable heterotrimeric complex consisting of an alpha catalytic (KIN10 or KIN11) subunit, and a beta (KINB) and a gamma (KING or SNF4) non-catalytic regulatory subunits. Interacts with KINB2, KINB3, SNF4 and probably with KINB1 and KING1. Interacts with SKP1/ASK1, PAD1 and the N-terminus of PRL1. Potential subunit of a SCF ubiquitin ligase complex consisting of a SNF1-related protein kinase, SKP1 and CUL1. The association of the SCF complex with the proteasome may be mediated by PAD1 and seems to be inhibited by the interaction with PRL1. Interacts with DSP4. Interacts with the begomovirus AL2 protein and the curtovirus L2 protein. Interacts with ATAF1. Interacts with CIPK14. Interacts with FLZ proteins through their FLZ-type zinc finger domains. Interacts with GEBP/STKR1. Interacts with REM4.1 and REM4.2. Interacts with ADK2. Interacts with IDD8. Interacts with FLZ3, FLZ9, TCP3, TCP13, HB21/ZHD3 and HB23/ZHD10. Interacts with WRI1. Interacts with IPK2b. Interacts with FLZ6 and FLZ10. In terms of processing, sumoylated by SIZ1. Phosphorylated at Thr-176 under submergence. Autophosphorylated. Phosphorylated at Thr-176 by GRIK1/SNAK2 and GRIK2/SNAK1. In terms of tissue distribution, expressed in roots, shoots, flower buds, flowers, siliques and leaves. Restrictly expressed to the base of the leaf, the vascular tissue, and the hydathodes.

It localises to the plastid. The protein resides in the chloroplast. The protein localises to the cytoplasm. Its subcellular location is the endoplasmic reticulum. It catalyses the reaction L-seryl-[protein] + ATP = O-phospho-L-seryl-[protein] + ADP + H(+). It carries out the reaction L-threonyl-[protein] + ATP = O-phospho-L-threonyl-[protein] + ADP + H(+). Inactivated by the begomovirus AL2 protein or the curtovirus L2 protein. Activated by phosphorylation at Thr-176 by GRIK1/SNAK2 and GRIK2/SNAK1. Inhibited by trehalose-6-phosphate. Catalytic subunit of the probable trimeric SNF1-related protein kinase (SnRK) complex, a central regulator of cellular energy homeostasis, which, in response to seemingly unrelated darkness, sugar and stress conditions, activates energy-producing pathways and inhibits energy-consuming processes. May play a role in a signal transduction cascade regulating gene expression and carbohydrate metabolism in higher plants. The SnRK complex may also be involved in the regulation of fatty acid synthesis by phosphorylation of acetyl-CoA carboxylase and in assimilation of nitrogen by phosphorylating nitrate reductase. In vitro, KIN11 exhibits kinase activity on sucrose phosphate synthase and the kinase activity is inhibited by PRL1. May be a subunit of a SCF ubiquitin ligase complex and thus be involved in proteasomal ubiquitination. Involved in innate antiviral defenses. Phosphorylates REM4.1 in vitro. Phosphorylates ADK2 in vitro. This chain is SNF1-related protein kinase catalytic subunit alpha KIN11, found in Arabidopsis thaliana (Mouse-ear cress).